Reading from the N-terminus, the 405-residue chain is Tryptophan synthase beta chain (405 aa).

Position 96 is an N6-(pyridoxal phosphate)lysine (lysine 96).

The protein belongs to the TrpB family. In terms of assembly, tetramer of two alpha and two beta chains. The cofactor is pyridoxal 5'-phosphate.

It catalyses the reaction (1S,2R)-1-C-(indol-3-yl)glycerol 3-phosphate + L-serine = D-glyceraldehyde 3-phosphate + L-tryptophan + H2O. It functions in the pathway amino-acid biosynthesis; L-tryptophan biosynthesis; L-tryptophan from chorismate: step 5/5. Functionally, the beta subunit is responsible for the synthesis of L-tryptophan from indole and L-serine. The sequence is that of Tryptophan synthase beta chain from Clostridium botulinum (strain Alaska E43 / Type E3).